Here is an 88-residue protein sequence, read N- to C-terminus: Small ribosomal subunit protein uS15 (88 aa).

It belongs to the universal ribosomal protein uS15 family. Part of the 30S ribosomal subunit. Forms a bridge to the 50S subunit in the 70S ribosome, contacting the 23S rRNA.

Its function is as follows. One of the primary rRNA binding proteins, it binds directly to 16S rRNA where it helps nucleate assembly of the platform of the 30S subunit by binding and bridging several RNA helices of the 16S rRNA. In terms of biological role, forms an intersubunit bridge (bridge B4) with the 23S rRNA of the 50S subunit in the ribosome. This chain is Small ribosomal subunit protein uS15, found in Paracidovorax citrulli (strain AAC00-1) (Acidovorax citrulli).